Here is a 685-residue protein sequence, read N- to C-terminus: Sulfite reductase [ferredoxin], chloroplastic (685 aa).

The N-terminal 51 residues, 1–51, are a transit peptide targeting the chloroplast; sequence MTTSFAAAALRDPKLQIPNYHGLRSSSAASSLSRNALSVPSSTRSSSLIRA. Residues C495, C501, C541, and C545 each contribute to the [4Fe-4S] cluster site. Residue C545 coordinates siroheme.

Belongs to the nitrite and sulfite reductase 4Fe-4S domain family. As to quaternary structure, monomer. Interacts with ferredoxin. Siroheme serves as cofactor. It depends on [4Fe-4S] cluster as a cofactor. In terms of processing, phosphorylated; this phosphorylation reduces DNA-binding. In terms of tissue distribution, expressed in leaves, stems, and roots.

The protein localises to the plastid. It localises to the chloroplast stroma. Its subcellular location is the chloroplast nucleoid. The protein resides in the plastid stroma. The enzyme catalyses hydrogen sulfide + 6 oxidized [2Fe-2S]-[ferredoxin] + 3 H2O = sulfite + 6 reduced [2Fe-2S]-[ferredoxin] + 7 H(+). Functionally, essential protein with sulfite reductase activity required in assimilatory sulfate reduction pathway during both primary and secondary metabolism and thus involved in development and growth. DNA-binding protein that binds to both double-stranded and single-stranded DNA without significant sequence specificity to reversibly repress the transcriptional activity of chloroplast nucleoids by promoting DNA compaction and possibly regulate DNA replication. The chain is Sulfite reductase [ferredoxin], chloroplastic (SIR) from Pisum sativum (Garden pea).